Reading from the N-terminus, the 331-residue chain is MKQTVYIASPESQQIHVWNLNHEGALTLTQVVDVPGQVQPMVVSPDKRYLYVGVRPEFRVLAYRIAPDDGALTFAAESALPGSPTHISTDHQGQFVFVGSYNAGNVSVTRLEDGLPVGVVDVVEGLDGCHSANISPDNRTLWVPALKQDRICLFTVSEDGHLVAQDPAEVTTVEGAGPRHMVFHPNEQYAYCVNELNSSVDVWELKDPHGNIECVQTLDMMPENFSDTRWAADIHITPDGRHLYACDRTASLITVFSVSEDGSVLSKEGFQPTETQPRGFNVDHSGKYLIAAGQKSHHISVYEIVGEQGLLHEKGRYAVGQGPMWVVVNAH.

Lys-287 carries the N6-acetyllysine modification.

This sequence belongs to the cycloisomerase 2 family.

The catalysed reaction is 6-phospho-D-glucono-1,5-lactone + H2O = 6-phospho-D-gluconate + H(+). Its pathway is carbohydrate degradation; pentose phosphate pathway; D-ribulose 5-phosphate from D-glucose 6-phosphate (oxidative stage): step 2/3. Functionally, catalyzes the hydrolysis of 6-phosphogluconolactone to 6-phosphogluconate. The sequence is that of 6-phosphogluconolactonase from Escherichia coli (strain SMS-3-5 / SECEC).